The following is a 608-amino-acid chain: Elongation factor 4 (608 aa).

The 183-residue stretch at 11 to 193 folds into the tr-type G domain; sequence SKIRNFSIIA…QIVEKVPAPD (183 aa). GTP-binding positions include 23–28 and 140–143; these read DHGKST and NKID.

It belongs to the TRAFAC class translation factor GTPase superfamily. Classic translation factor GTPase family. LepA subfamily.

Its subcellular location is the cell membrane. It catalyses the reaction GTP + H2O = GDP + phosphate + H(+). In terms of biological role, required for accurate and efficient protein synthesis under certain stress conditions. May act as a fidelity factor of the translation reaction, by catalyzing a one-codon backward translocation of tRNAs on improperly translocated ribosomes. Back-translocation proceeds from a post-translocation (POST) complex to a pre-translocation (PRE) complex, thus giving elongation factor G a second chance to translocate the tRNAs correctly. Binds to ribosomes in a GTP-dependent manner. The polypeptide is Elongation factor 4 (Bacillus cytotoxicus (strain DSM 22905 / CIP 110041 / 391-98 / NVH 391-98)).